The sequence spans 294 residues: N-acetylmuramic acid 6-phosphate etherase (294 aa).

Positions 54-217 constitute an SIS domain; the sequence is VIKSFEEEGR…STASMIGVGK (164 aa). Glu82 functions as the Proton donor in the catalytic mechanism. Glu113 is an active-site residue.

The protein belongs to the GCKR-like family. MurNAc-6-P etherase subfamily. As to quaternary structure, homodimer.

The enzyme catalyses N-acetyl-D-muramate 6-phosphate + H2O = N-acetyl-D-glucosamine 6-phosphate + (R)-lactate. The protein operates within amino-sugar metabolism; N-acetylmuramate degradation. Specifically catalyzes the cleavage of the D-lactyl ether substituent of MurNAc 6-phosphate, producing GlcNAc 6-phosphate and D-lactate. The protein is N-acetylmuramic acid 6-phosphate etherase of Bacillus cereus (strain ATCC 10987 / NRS 248).